Consider the following 610-residue polypeptide: Dihydroxy-acid dehydratase (610 aa).

D81 serves as a coordination point for Mg(2+). Position 122 (C122) interacts with [2Fe-2S] cluster. 2 residues coordinate Mg(2+): D123 and K124. K124 is modified (N6-carboxylysine). C196 contributes to the [2Fe-2S] cluster binding site. E492 is a binding site for Mg(2+). S518 functions as the Proton acceptor in the catalytic mechanism.

The protein belongs to the IlvD/Edd family. As to quaternary structure, homodimer. Requires [2Fe-2S] cluster as cofactor. It depends on Mg(2+) as a cofactor.

The catalysed reaction is (2R)-2,3-dihydroxy-3-methylbutanoate = 3-methyl-2-oxobutanoate + H2O. The enzyme catalyses (2R,3R)-2,3-dihydroxy-3-methylpentanoate = (S)-3-methyl-2-oxopentanoate + H2O. Its pathway is amino-acid biosynthesis; L-isoleucine biosynthesis; L-isoleucine from 2-oxobutanoate: step 3/4. It participates in amino-acid biosynthesis; L-valine biosynthesis; L-valine from pyruvate: step 3/4. Its function is as follows. Functions in the biosynthesis of branched-chain amino acids. Catalyzes the dehydration of (2R,3R)-2,3-dihydroxy-3-methylpentanoate (2,3-dihydroxy-3-methylvalerate) into 2-oxo-3-methylpentanoate (2-oxo-3-methylvalerate) and of (2R)-2,3-dihydroxy-3-methylbutanoate (2,3-dihydroxyisovalerate) into 2-oxo-3-methylbutanoate (2-oxoisovalerate), the penultimate precursor to L-isoleucine and L-valine, respectively. This is Dihydroxy-acid dehydratase from Ruegeria pomeroyi (strain ATCC 700808 / DSM 15171 / DSS-3) (Silicibacter pomeroyi).